The chain runs to 228 residues: LHFPL tetraspan subfamily member 2 protein (228 aa).

A run of 4 helical transmembrane segments spans residues 11–31 (MLWT…FMSA), 102–122 (IFLA…VFTM), 132–152 (IFNV…LGLI), and 181–201 (LGWA…CAVF).

The protein belongs to the LHFP family. Expressed in all tissues and cell lines examined except brain and peripheral blood leukocytes.

The protein resides in the membrane. In terms of biological role, plays a role in female and male fertility. Involved in distal reproductive tract development. This is LHFPL tetraspan subfamily member 2 protein from Homo sapiens (Human).